The chain runs to 641 residues: Macrolide export ATP-binding/permease protein MacB (641 aa).

The ABC transporter domain occupies 2–236 (IFLKNICKNI…LTLKTMSKEK (235 aa)). 34 to 41 (GQSGSGKT) is a binding site for ATP. The next 4 helical transmembrane spans lie at 265-285 (ILTM…VALG), 519-539 (ACVA…IMLV), 571-591 (MICT…IFAF), and 604-624 (AYSV…FGFF).

It belongs to the ABC transporter superfamily. Macrolide exporter (TC 3.A.1.122) family. As to quaternary structure, homodimer.

It localises to the cell inner membrane. Functionally, non-canonical ABC transporter that contains transmembrane domains (TMD), which form a pore in the inner membrane, and an ATP-binding domain (NBD), which is responsible for energy generation. Confers resistance against macrolides. The protein is Macrolide export ATP-binding/permease protein MacB of Campylobacter jejuni subsp. jejuni serotype O:23/36 (strain 81-176).